Reading from the N-terminus, the 550-residue chain is Chaperonin GroEL (550 aa).

Residues 30 to 33, Lys51, 87 to 91, Gly415, and Asp496 each bind ATP; these read TLGP and DGTTT.

Belongs to the chaperonin (HSP60) family. Forms a cylinder of 14 subunits composed of two heptameric rings stacked back-to-back. Interacts with the co-chaperonin GroES.

Its subcellular location is the cytoplasm. It carries out the reaction ATP + H2O + a folded polypeptide = ADP + phosphate + an unfolded polypeptide.. Together with its co-chaperonin GroES, plays an essential role in assisting protein folding. The GroEL-GroES system forms a nano-cage that allows encapsulation of the non-native substrate proteins and provides a physical environment optimized to promote and accelerate protein folding. In Rickettsia typhi (strain ATCC VR-144 / Wilmington), this protein is Chaperonin GroEL.